Consider the following 427-residue polypeptide: Endothelin-1 receptor (427 aa).

The first 20 residues, 1 to 20, serve as a signal peptide directing secretion; it reads METFWLRLSFWVALVGGVIS. The Extracellular segment spans residues 21 to 80; that stretch reads DNPESYSTNLSIHVDSVATFHGTELSFVVTTHQPTNLALPSNGSMHNYCPQQTKITSAFK. N-linked (GlcNAc...) asparagine glycans are attached at residues Asn-29 and Asn-62. A helical membrane pass occupies residues 81-102; it reads YINTVISCTIFIVGMVGNATLL. Residues 103–112 are Cytoplasmic-facing; the sequence is RIIYQNKCMR. Residues 113–132 traverse the membrane as a helical segment; the sequence is NGPNALIASLALGDLIYVVI. At 133–159 the chain is on the extracellular side; sequence DLPINVFKLLAGRWPFEQNDFGVFLCK. Cys-158 and Cys-239 are joined by a disulfide. Residues 160 to 181 traverse the membrane as a helical segment; that stretch reads LFPFLQKSSVGITVLNLCALSV. At 182 to 205 the chain is on the cytoplasmic side; the sequence is DRYRAVASWSRVQGIGIPLVTAIE. The helical transmembrane segment at 206 to 229 threads the bilayer; it reads IVSIWILSFILAIPEAIGFVMVPF. The Extracellular portion of the chain corresponds to 230-256; it reads EYKGAQHRTCMLNATSKFMEFYQDVKD. Residues 257 to 278 traverse the membrane as a helical segment; it reads WWLFGFYFCMPLVCTAIFYTLM. Residues 279 to 306 are Cytoplasmic-facing; that stretch reads TCEMLNRRNGSLRIALSEHLKQRREVAK. Residues 307–328 form a helical membrane-spanning segment; that stretch reads TVFCLVVIFALCWFPLHLSRIL. Over 329-347 the chain is Extracellular; sequence KKTVYDEMDTNRCELLSFL. The helical transmembrane segment at 348-372 threads the bilayer; that stretch reads LLMDYIGINLATMNSCINPIALYFV. The Cytoplasmic segment spans residues 373–427; sequence SKKFKNCFQSCLCCCCYQSKSLMTSVPMNGTSIQWKNHEQNNHNTERSSHKDSIN. Ser-425 carries the phosphoserine modification.

Belongs to the G-protein coupled receptor 1 family. Endothelin receptor subfamily. EDNRA sub-subfamily. In terms of assembly, interacts with HDAC7 and KAT5.

The protein resides in the cell membrane. Functionally, receptor for endothelin-1. Mediates its action by association with G proteins that activate a phosphatidylinositol-calcium second messenger system. The rank order of binding affinities for ET-A is: ET1 &gt; ET2 &gt;&gt; ET3. The polypeptide is Endothelin-1 receptor (Bos taurus (Bovine)).